We begin with the raw amino-acid sequence, 122 residues long: MPPLAPQLCRAVFLVPILLLLQVKPLNGSPGPKDGSQTEKTPSADQNQEQFEEHFVASSVGEMWQVVDMAQQEEDQSSKTAAVHKHSFHLSFCFSLASVMVFSGGPLRRTFPNIQLCFMLTH.

An N-terminal signal peptide occupies residues 1–28; sequence MPPLAPQLCRAVFLVPILLLLQVKPLNG. Positions 27-51 are disordered; the sequence is NGSPGPKDGSQTEKTPSADQNQEQF. Polar residues predominate over residues 38-49; it reads TEKTPSADQNQE.

It is found in the secreted. Its function is as follows. Sperm protein required for fusion of sperm with the egg membrane during fertilization. This chain is Sperm-egg fusion protein LLCFC1, found in Homo sapiens (Human).